We begin with the raw amino-acid sequence, 364 residues long: GTPase Obg (364 aa).

An Obg domain is found at 1 to 159 (MKFVDEAYID…KSLKLELKVL (159 aa)). Residues 160-334 (ADVGLLGMPN…LVKTIYQHVK (175 aa)) form the OBG-type G domain. Residues 166–173 (GMPNAGKS), 191–195 (FTTLH), 213–216 (DLPG), 284–287 (NKLD), and 315–317 (SAL) each bind GTP. Residues Ser-173 and Thr-193 each contribute to the Mg(2+) site. Positions 337–364 (QKSEQPEEEVDPRFIELPPEPAKPASSD) are disordered.

Belongs to the TRAFAC class OBG-HflX-like GTPase superfamily. OBG GTPase family. Monomer. The cofactor is Mg(2+).

The protein resides in the cytoplasm. An essential GTPase which binds GTP, GDP and possibly (p)ppGpp with moderate affinity, with high nucleotide exchange rates and a fairly low GTP hydrolysis rate. Plays a role in control of the cell cycle, stress response, ribosome biogenesis and in those bacteria that undergo differentiation, in morphogenesis control. This is GTPase Obg from Polaromonas naphthalenivorans (strain CJ2).